The following is a 173-amino-acid chain: Photosystem I assembly protein Ycf3 (173 aa).

TPR repeat units follow at residues 35–68, 72–105, and 120–153; these read AFAY…EEDP, SFIL…NPKM, and GQRS…APNN.

The protein belongs to the Ycf3 family.

The protein localises to the cellular thylakoid membrane. In terms of biological role, essential for the assembly of the photosystem I (PSI) complex. May act as a chaperone-like factor to guide the assembly of the PSI subunits. In Synechococcus elongatus (strain ATCC 33912 / PCC 7942 / FACHB-805) (Anacystis nidulans R2), this protein is Photosystem I assembly protein Ycf3.